Here is a 488-residue protein sequence, read N- to C-terminus: MLVLPPPLYEIVKRAQEWRPLDEIARELGVTQESLMRYVEEGRAKGVLQVDKRYAVAYELTEEGALRVREGLPEYKLLKAAVCDEARCVIELKHPEAPLALANLAKLGVKPRGGVIELSRDVYERVLASIEEKQRALAQLDSAPPDLLQEFLRRKLVKKVEKTLIYVKAAAPLDSVKPAEVKTALTSEDIATGRWREYYLKPFDLSIEPPQYPAPVPHFFNEFLNYVREVMVGLGFEEVRGPILEVEFWNFDALFQAQDHPAREVHDTFYVHWDGPREEPPRHLMEAVGRVHEEKWRYKWSPQKALNLVLRTQTTATTIRALAERGEGAYKVFTIGRVFRPEKLDPKHSMEFHQLDGIVVGPGLTFKHLLGQLEQIAKALGMGRVKFRPAYFPFTSPSVEVYAEHPTLGWVEFGGAGIFRPEVTEPLGVKNSRVLAWGWGLDRVAMILLGIDDIRDLFTKDLDKLREYYARWEKYRRGVGTRGIKYTL.

Residues T315, 354–356, F394, and F419 contribute to the L-phenylalanine site; that span reads QLD.

This sequence belongs to the class-II aminoacyl-tRNA synthetase family. Phe-tRNA synthetase alpha subunit type 2 subfamily. Tetramer of two alpha and two beta subunits. Requires Mg(2+) as cofactor.

Its subcellular location is the cytoplasm. The enzyme catalyses tRNA(Phe) + L-phenylalanine + ATP = L-phenylalanyl-tRNA(Phe) + AMP + diphosphate + H(+). The chain is Phenylalanine--tRNA ligase alpha subunit from Pyrobaculum calidifontis (strain DSM 21063 / JCM 11548 / VA1).